We begin with the raw amino-acid sequence, 264 residues long: Acyl-[acyl-carrier-protein]--UDP-N-acetylglucosamine O-acyltransferase (264 aa).

It belongs to the transferase hexapeptide repeat family. LpxA subfamily. In terms of assembly, homotrimer.

The protein resides in the cytoplasm. The catalysed reaction is a (3R)-hydroxyacyl-[ACP] + UDP-N-acetyl-alpha-D-glucosamine = a UDP-3-O-[(3R)-3-hydroxyacyl]-N-acetyl-alpha-D-glucosamine + holo-[ACP]. The protein operates within glycolipid biosynthesis; lipid IV(A) biosynthesis; lipid IV(A) from (3R)-3-hydroxytetradecanoyl-[acyl-carrier-protein] and UDP-N-acetyl-alpha-D-glucosamine: step 1/6. In terms of biological role, involved in the biosynthesis of lipid A, a phosphorylated glycolipid that anchors the lipopolysaccharide to the outer membrane of the cell. This Rickettsia africae (strain ESF-5) protein is Acyl-[acyl-carrier-protein]--UDP-N-acetylglucosamine O-acyltransferase.